The chain runs to 670 residues: UvrABC system protein B (670 aa).

The 158-residue stretch at 26-183 (EGLEDGLAHQ…RRLAELQYSR (158 aa)) folds into the Helicase ATP-binding domain. An ATP-binding site is contributed by 39–46 (GVTGSGKT). The Beta-hairpin motif lies at 92 to 115 (YYDYYQPEAYVPSSDTFIEKDASV). The Helicase C-terminal domain occupies 431–597 (QVDDLLSEIR…GLNKKISDIL (167 aa)). Residues 630 to 665 (ELKIRELESKMLTHAQNLEFEEAAALRDELQALRAQ) enclose the UVR domain.

It belongs to the UvrB family. In terms of assembly, forms a heterotetramer with UvrA during the search for lesions. Interacts with UvrC in an incision complex.

It localises to the cytoplasm. In terms of biological role, the UvrABC repair system catalyzes the recognition and processing of DNA lesions. A damage recognition complex composed of 2 UvrA and 2 UvrB subunits scans DNA for abnormalities. Upon binding of the UvrA(2)B(2) complex to a putative damaged site, the DNA wraps around one UvrB monomer. DNA wrap is dependent on ATP binding by UvrB and probably causes local melting of the DNA helix, facilitating insertion of UvrB beta-hairpin between the DNA strands. Then UvrB probes one DNA strand for the presence of a lesion. If a lesion is found the UvrA subunits dissociate and the UvrB-DNA preincision complex is formed. This complex is subsequently bound by UvrC and the second UvrB is released. If no lesion is found, the DNA wraps around the other UvrB subunit that will check the other stand for damage. This chain is UvrABC system protein B, found in Pectobacterium carotovorum subsp. carotovorum (strain PC1).